We begin with the raw amino-acid sequence, 391 residues long: Putative gustatory receptor 98a (391 aa).

Residues 1 to 31 are Cytoplasmic-facing; sequence MEQMSGELHAASLLYMRRLMKCLGMLPFGQN. A helical membrane pass occupies residues 32–52; sequence LFSKGFCYVLLFVSLGFSSYW. Residues 53–74 lie on the Extracellular side of the membrane; that stretch reads RFSFDYEFDYDFLNDRFSSTID. A helical transmembrane segment spans residues 75–95; the sequence is LSNFVALVLGHAIIVLELLWG. Residues 96 to 128 lie on the Cytoplasmic side of the membrane; that stretch reads NCSKDVDRQLQAIHSQIKLQLGTSNSTDRVRRY. The chain crosses the membrane as a helical span at residues 129-149; the sequence is CNWIYGSLIIRWLIFIVVTIY. At 150–173 the chain is on the extracellular side; it reads SNRALTINATYSELVFLARFSEFT. An N-linked (GlcNAc...) asparagine glycan is attached at Asn-157. Residues 174 to 194 form a helical membrane-spanning segment; it reads LYCAVILFIYQELIVGGSNVL. The Cytoplasmic portion of the chain corresponds to 195-239; that stretch reads DELYRTRYEMWSIRRLSLQKLAKLQAIHNSLWQAIRCLECYFQLS. A helical membrane pass occupies residues 240 to 260; it reads LITLLMKFFIDTSALPYWLYL. Over 261 to 272 the chain is Extracellular; it reads SRVEHTRVAVQH. A helical membrane pass occupies residues 273–293; the sequence is YVATVECIKLLEIVVPCYLCT. Residues 294-347 are Cytoplasmic-facing; it reads RCDAMQRKFLSMFYTVTTDRRSSQLNAALRSLNLQLSQEKYKFSAGGMVDINTE. The chain crosses the membrane as a helical span at residues 348–368; that stretch reads MLGKFFFGMISYIVICIQFSI. Topologically, residues 369–391 are extracellular; the sequence is NFRAKKMSNEQMSQNITSTSAPI. Residue Asn-383 is glycosylated (N-linked (GlcNAc...) asparagine).

This sequence belongs to the insect chemoreceptor superfamily. Gustatory receptor (GR) family. Gr2a subfamily.

The protein localises to the cell membrane. Probable gustatory receptor which mediates acceptance or avoidance behavior, depending on its substrates. The polypeptide is Putative gustatory receptor 98a (Gr98a) (Drosophila melanogaster (Fruit fly)).